Here is a 620-residue protein sequence, read N- to C-terminus: Glutathione-regulated potassium-efflux system protein KefC (620 aa).

A run of 12 helical transmembrane segments spans residues 4 to 24 (HTLLQALIYLGSAALIVPIAV), 26 to 46 (LGLGSVLGYLIAGCIIGPWGL), 54 to 74 (SILHFAEIGVVLMLFVIGLEL), 90 to 110 (GALQMVVCGGLIGLFCMFLGL), 114 to 134 (VAELIGMTLALSSTAIAMQAM), 149 to 169 (FAVLLFQDIAAIPLVAMIPLL), 178 to 198 (LGAFALSALKVAGALALVVVL), 218 to 238 (VFSAVALFLVFGFGLLLEEVG), 270 to 290 (GLLLGLFFIGVGMSIDFGTLV), 294 to 314 (LRILLLLAGFLAIKIVMLWLV), 327 to 347 (WFAVLLGQGSEFAFVVFGAAQ), and 359 to 379 (ALTLAVALSMAATPIFLVLLT). The RCK N-terminal domain maps to 399–518 (QPRVIVAGFG…AGVAMPERET (120 aa)). Positions 599–620 (QGTAEGKHSGEVADEPEVKPSI) are disordered.

Belongs to the monovalent cation:proton antiporter 2 (CPA2) transporter (TC 2.A.37) family. KefC subfamily. As to quaternary structure, homodimer. Interacts with the regulatory subunit KefF.

The protein localises to the cell inner membrane. In terms of biological role, pore-forming subunit of a potassium efflux system that confers protection against electrophiles. Catalyzes K(+)/H(+) antiport. This Salmonella paratyphi B (strain ATCC BAA-1250 / SPB7) protein is Glutathione-regulated potassium-efflux system protein KefC.